A 1408-amino-acid polypeptide reads, in one-letter code: DNA-directed RNA polymerase subunit beta' (1408 aa).

Residues Cys-70, Cys-72, Cys-85, and Cys-88 each coordinate Zn(2+). The Mg(2+) site is built by Asp-460, Asp-462, and Asp-464. Residues Cys-814, Cys-887, Cys-894, and Cys-897 each coordinate Zn(2+).

It belongs to the RNA polymerase beta' chain family. In terms of assembly, the RNAP catalytic core consists of 2 alpha, 1 beta, 1 beta' and 1 omega subunit. When a sigma factor is associated with the core the holoenzyme is formed, which can initiate transcription. Mg(2+) serves as cofactor. It depends on Zn(2+) as a cofactor.

The catalysed reaction is RNA(n) + a ribonucleoside 5'-triphosphate = RNA(n+1) + diphosphate. In terms of biological role, DNA-dependent RNA polymerase catalyzes the transcription of DNA into RNA using the four ribonucleoside triphosphates as substrates. This is DNA-directed RNA polymerase subunit beta' from Hydrogenovibrio crunogenus (strain DSM 25203 / XCL-2) (Thiomicrospira crunogena).